A 94-amino-acid chain; its full sequence is Endoribonuclease VapD 2 (94 aa).

This sequence belongs to the VapD ribonuclease family. In terms of assembly, homodimer.

Functionally, cleaves ssRNA, mostly between U:A. The protein is Endoribonuclease VapD 2 of Riemerella anatipestifer (Moraxella anatipestifer).